Consider the following 407-residue polypeptide: Tryptophan synthase beta chain (407 aa).

Position 91 is an N6-(pyridoxal phosphate)lysine (Lys-91).

This sequence belongs to the TrpB family. In terms of assembly, tetramer of two alpha and two beta chains. Requires pyridoxal 5'-phosphate as cofactor.

The catalysed reaction is (1S,2R)-1-C-(indol-3-yl)glycerol 3-phosphate + L-serine = D-glyceraldehyde 3-phosphate + L-tryptophan + H2O. Its pathway is amino-acid biosynthesis; L-tryptophan biosynthesis; L-tryptophan from chorismate: step 5/5. The beta subunit is responsible for the synthesis of L-tryptophan from indole and L-serine. The protein is Tryptophan synthase beta chain of Streptococcus pneumoniae serotype 2 (strain D39 / NCTC 7466).